The sequence spans 499 residues: T-cell activation inhibitor, mitochondrial (499 aa).

A coiled-coil region spans residues 206–233 (LRNSLPLRKELDRLKNELSELLQLSDIR).

Expressed in peripheral blood leukocytes, mainly in T-lymphocytes.

It is found in the mitochondrion. Its function is as follows. May regulate T-cell apoptosis. The protein is T-cell activation inhibitor, mitochondrial (TCAIM) of Mus musculus (Mouse).